The chain runs to 634 residues: 1-deoxy-D-xylulose-5-phosphate synthase (634 aa).

Residues His74 and Ala115–Ser117 each bind thiamine diphosphate. Position 146 (Asp146) interacts with Mg(2+). Residues Gly147–Ala148, Asn176, Tyr283, and Glu365 each bind thiamine diphosphate. Asn176 contributes to the Mg(2+) binding site.

The protein belongs to the transketolase family. DXPS subfamily. As to quaternary structure, homodimer. The cofactor is Mg(2+). Thiamine diphosphate serves as cofactor.

It carries out the reaction D-glyceraldehyde 3-phosphate + pyruvate + H(+) = 1-deoxy-D-xylulose 5-phosphate + CO2. The protein operates within metabolic intermediate biosynthesis; 1-deoxy-D-xylulose 5-phosphate biosynthesis; 1-deoxy-D-xylulose 5-phosphate from D-glyceraldehyde 3-phosphate and pyruvate: step 1/1. Functionally, catalyzes the acyloin condensation reaction between C atoms 2 and 3 of pyruvate and glyceraldehyde 3-phosphate to yield 1-deoxy-D-xylulose-5-phosphate (DXP). This chain is 1-deoxy-D-xylulose-5-phosphate synthase, found in Burkholderia cenocepacia (strain ATCC BAA-245 / DSM 16553 / LMG 16656 / NCTC 13227 / J2315 / CF5610) (Burkholderia cepacia (strain J2315)).